A 283-amino-acid polypeptide reads, in one-letter code: Ribose-phosphate pyrophosphokinase (283 aa).

Residues 34–36 (DGE) and 89–90 (RQ) contribute to the ATP site. Mg(2+) is bound by residues H120 and D159. K182 is a catalytic residue. Positions 184 and 208 each coordinate D-ribose 5-phosphate.

It belongs to the ribose-phosphate pyrophosphokinase family. Class III (archaeal) subfamily. Mg(2+) serves as cofactor.

The protein resides in the cytoplasm. The catalysed reaction is D-ribose 5-phosphate + ATP = 5-phospho-alpha-D-ribose 1-diphosphate + AMP + H(+). The protein operates within metabolic intermediate biosynthesis; 5-phospho-alpha-D-ribose 1-diphosphate biosynthesis; 5-phospho-alpha-D-ribose 1-diphosphate from D-ribose 5-phosphate (route I): step 1/1. Functionally, involved in the biosynthesis of the central metabolite phospho-alpha-D-ribosyl-1-pyrophosphate (PRPP) via the transfer of pyrophosphoryl group from ATP to 1-hydroxyl of ribose-5-phosphate (Rib-5-P). The protein is Ribose-phosphate pyrophosphokinase of Methanosarcina acetivorans (strain ATCC 35395 / DSM 2834 / JCM 12185 / C2A).